We begin with the raw amino-acid sequence, 190 residues long: Xanthine phosphoribosyltransferase (190 aa).

Residues L20 and N27 each coordinate xanthine. 5-phospho-alpha-D-ribose 1-diphosphate is bound at residue A128–A132. K156 lines the xanthine pocket.

The protein belongs to the purine/pyrimidine phosphoribosyltransferase family. Xpt subfamily. As to quaternary structure, homodimer.

The protein resides in the cytoplasm. It carries out the reaction XMP + diphosphate = xanthine + 5-phospho-alpha-D-ribose 1-diphosphate. It participates in purine metabolism; XMP biosynthesis via salvage pathway; XMP from xanthine: step 1/1. Converts the preformed base xanthine, a product of nucleic acid breakdown, to xanthosine 5'-monophosphate (XMP), so it can be reused for RNA or DNA synthesis. The chain is Xanthine phosphoribosyltransferase from Pediococcus pentosaceus (strain ATCC 25745 / CCUG 21536 / LMG 10740 / 183-1w).